We begin with the raw amino-acid sequence, 388 residues long: Chorismate synthase (388 aa).

Residues Arg-39 and Arg-45 each coordinate NADP(+). FMN contacts are provided by residues 130–132 (RSS), 251–252 (NA), Gly-296, 311–315 (KPIPT), and Arg-337.

This sequence belongs to the chorismate synthase family. Homotetramer. Requires FMNH2 as cofactor.

The catalysed reaction is 5-O-(1-carboxyvinyl)-3-phosphoshikimate = chorismate + phosphate. It participates in metabolic intermediate biosynthesis; chorismate biosynthesis; chorismate from D-erythrose 4-phosphate and phosphoenolpyruvate: step 7/7. Its function is as follows. Catalyzes the anti-1,4-elimination of the C-3 phosphate and the C-6 proR hydrogen from 5-enolpyruvylshikimate-3-phosphate (EPSP) to yield chorismate, which is the branch point compound that serves as the starting substrate for the three terminal pathways of aromatic amino acid biosynthesis. This reaction introduces a second double bond into the aromatic ring system. The protein is Chorismate synthase of Streptococcus pyogenes serotype M28 (strain MGAS6180).